A 337-amino-acid polypeptide reads, in one-letter code: Ornithine carbamoyltransferase, catabolic (337 aa).

Carbamoyl phosphate-binding positions include 57–60, Gln-84, Arg-108, and 135–138; these read STRT and HPTQ. L-ornithine contacts are provided by residues Asn-167, Asp-231, and 235–236; that span reads SM. Carbamoyl phosphate is bound by residues 272–273 and Arg-317; that span reads CL.

Belongs to the aspartate/ornithine carbamoyltransferase superfamily. OTCase family.

The protein resides in the cytoplasm. It catalyses the reaction carbamoyl phosphate + L-ornithine = L-citrulline + phosphate + H(+). The protein operates within amino-acid degradation; L-arginine degradation via ADI pathway; carbamoyl phosphate from L-arginine: step 2/2. Its function is as follows. Reversibly catalyzes the transfer of the carbamoyl group from carbamoyl phosphate (CP) to the N(epsilon) atom of ornithine (ORN) to produce L-citrulline. This chain is Ornithine carbamoyltransferase, catabolic, found in Streptococcus ratti.